The primary structure comprises 426 residues: MLNIKWIRENQELFDDKLRQRFIEPMAKRIEELDGKKRKITNLIQEFQHARKVKSKILGNINPKSGEEFEGLQRDVKDINEKLEELEQDLNNNNELNELLNTLPNIPDEEVPYGIDESMNKLIRTHGEVDLNAQNKKQHFELGVKLDLMDFEQTAKISGARFVTLKGDLAKLERALANFMLDVHTGEFGFLEVSPPVLVRDNAMYNSGQLPKFADESFATTNGYRLIPTAEVSLVNMVADTIIPREKLPMRLVAYTPCFRSEAGSSGRDTRGMIRLHQFSKVELVSITTPEESKNEHEYMTNASETILQKLGLHYRTMLLCTGDMGFASQKTYDIEVWLPGQKQYREIASCSNCGDFQARRMKARYKEFGSHDTTLVHTLNASGLPIGRTMVAILENYQNEDGSITVPDVLVNYMGGLQKITAYKE.

Position 229 to 231 (Thr229 to Glu231) interacts with L-serine. ATP is bound at residue Arg260–Glu262. Glu283 contributes to the L-serine binding site. Glu347–Ser350 serves as a coordination point for ATP. Ser383 lines the L-serine pocket.

Belongs to the class-II aminoacyl-tRNA synthetase family. Type-1 seryl-tRNA synthetase subfamily. As to quaternary structure, homodimer. The tRNA molecule binds across the dimer.

It is found in the cytoplasm. The catalysed reaction is tRNA(Ser) + L-serine + ATP = L-seryl-tRNA(Ser) + AMP + diphosphate + H(+). It catalyses the reaction tRNA(Sec) + L-serine + ATP = L-seryl-tRNA(Sec) + AMP + diphosphate + H(+). It functions in the pathway aminoacyl-tRNA biosynthesis; selenocysteinyl-tRNA(Sec) biosynthesis; L-seryl-tRNA(Sec) from L-serine and tRNA(Sec): step 1/1. Its function is as follows. Catalyzes the attachment of serine to tRNA(Ser). Is also able to aminoacylate tRNA(Sec) with serine, to form the misacylated tRNA L-seryl-tRNA(Sec), which will be further converted into selenocysteinyl-tRNA(Sec). In Rickettsia bellii (strain RML369-C), this protein is Serine--tRNA ligase.